Reading from the N-terminus, the 326-residue chain is Dolichyl-phosphate beta-glucosyltransferase (326 aa).

Over 1–7 the chain is Lumenal; it reads MWTCLCQ. A helical transmembrane segment spans residues 8–28; it reads LCFYLLSTLAVAALSIAALVL. The Cytoplasmic segment spans residues 29-326; it reads YKTKPYPNIK…RIASIQKKEK (298 aa).

Belongs to the glycosyltransferase 2 family.

The protein localises to the endoplasmic reticulum membrane. It catalyses the reaction a di-trans,poly-cis-dolichyl phosphate + UDP-alpha-D-glucose = a di-trans,poly-cis-dolichyl beta-D-glucosyl phosphate + UDP. Its pathway is protein modification; protein glycosylation. Functionally, required for normal production of N-glycosylated proteins in the endoplasmic reticulum (ER). Required for embryonic segmentation, dorsal-ventral patterning and gastrulation. Required for chitin orientation and shaping of the apical and lateral plasma membranes of epidermal cells during cuticle differentiation. Also required for correctly shaping apical membrane topology of the epithelia of other organs such as the midgut and the hindgut. This chain is Dolichyl-phosphate beta-glucosyltransferase (wol), found in Drosophila melanogaster (Fruit fly).